The primary structure comprises 414 residues: Glutamyl-tRNA reductase (414 aa).

Substrate is bound by residues 49–52 (TCNR), Ser108, 113–115 (EPQ), and Gln119. The active-site Nucleophile is the Cys50. Position 188–193 (188–193 (GAGQTG)) interacts with NADP(+).

Belongs to the glutamyl-tRNA reductase family. In terms of assembly, homodimer.

It carries out the reaction (S)-4-amino-5-oxopentanoate + tRNA(Glu) + NADP(+) = L-glutamyl-tRNA(Glu) + NADPH + H(+). Its pathway is porphyrin-containing compound metabolism; protoporphyrin-IX biosynthesis; 5-aminolevulinate from L-glutamyl-tRNA(Glu): step 1/2. Catalyzes the NADPH-dependent reduction of glutamyl-tRNA(Glu) to glutamate 1-semialdehyde (GSA). This is Glutamyl-tRNA reductase from Francisella philomiragia subsp. philomiragia (strain ATCC 25017 / CCUG 19701 / FSC 153 / O#319-036).